The chain runs to 506 residues: Glutamate--tRNA ligase (506 aa).

A 'HIGH' region motif is present at residues 14 to 24 (PSPTGYLHIGG). The 'KMSKS' region signature appears at 261–265 (KLSKR). Lys-264 contributes to the ATP binding site.

It belongs to the class-I aminoacyl-tRNA synthetase family. Glutamate--tRNA ligase type 1 subfamily. As to quaternary structure, monomer.

The protein localises to the cytoplasm. The catalysed reaction is tRNA(Glu) + L-glutamate + ATP = L-glutamyl-tRNA(Glu) + AMP + diphosphate. Its function is as follows. Catalyzes the attachment of glutamate to tRNA(Glu) in a two-step reaction: glutamate is first activated by ATP to form Glu-AMP and then transferred to the acceptor end of tRNA(Glu). The chain is Glutamate--tRNA ligase from Roseiflexus sp. (strain RS-1).